The sequence spans 293 residues: N-acetylneuraminate lyase (293 aa).

Positions 47, 48, and 136 each coordinate aceneuramate. Residue tyrosine 136 is the Proton donor of the active site. The Schiff-base intermediate with substrate role is filled by lysine 164. 6 residues coordinate aceneuramate: threonine 166, glycine 188, aspartate 190, glutamate 191, serine 207, and tyrosine 251.

It belongs to the DapA family. NanA subfamily. Homotetramer.

The protein resides in the cytoplasm. The enzyme catalyses aceneuramate = aldehydo-N-acetyl-D-mannosamine + pyruvate. The protein operates within amino-sugar metabolism; N-acetylneuraminate degradation; D-fructose 6-phosphate from N-acetylneuraminate: step 1/5. In terms of biological role, catalyzes the reversible aldol cleavage of N-acetylneuraminic acid (sialic acid; Neu5Ac) to form pyruvate and N-acetylmannosamine (ManNAc) via a Schiff base intermediate. The chain is N-acetylneuraminate lyase from Pasteurella multocida (strain Pm70).